The chain runs to 255 residues: MSSDISNNDHLVLSDNPDHPANLIPSLCAKFWTLGWVTGTGGGCSIRENDLVYIAPSGVQKELMKAADIYVLSLAAQTASLRDRVYLRSPPCYKPSQCTPLFLAAFTKRRAGCCIHTHSQWAVLVTLILEAGGGPGGAEDAREFRINNIEQIKGFGKGFEKSGNLGYHDTLRIPVIENTAHEEDLTEFLEEAMDKYPDTYAVLVRRHGVYVWGDNVHKAKTQCESLDYLFQLAVEMKKMSLPWITDITPVKTRRS.

Residue C98 participates in substrate binding. The Zn(2+) site is built by H116 and H118. The Proton donor/acceptor role is filled by E150. H207 serves as a coordination point for Zn(2+).

The protein belongs to the aldolase class II family. MtnB subfamily. Zn(2+) is required as a cofactor.

The protein resides in the cytoplasm. The enzyme catalyses 5-(methylsulfanyl)-D-ribulose 1-phosphate = 5-methylsulfanyl-2,3-dioxopentyl phosphate + H2O. It functions in the pathway amino-acid biosynthesis; L-methionine biosynthesis via salvage pathway; L-methionine from S-methyl-5-thio-alpha-D-ribose 1-phosphate: step 2/6. In terms of biological role, catalyzes the dehydration of methylthioribulose-1-phosphate (MTRu-1-P) into 2,3-diketo-5-methylthiopentyl-1-phosphate (DK-MTP-1-P). This chain is Methylthioribulose-1-phosphate dehydratase, found in Pyricularia oryzae (strain 70-15 / ATCC MYA-4617 / FGSC 8958) (Rice blast fungus).